The following is a 491-amino-acid chain: Glutamyl-tRNA(Gln) amidotransferase subunit A (491 aa).

Catalysis depends on charge relay system residues K78 and S158. S182 acts as the Acyl-ester intermediate in catalysis.

This sequence belongs to the amidase family. GatA subfamily. Heterotrimer of A, B and C subunits.

It carries out the reaction L-glutamyl-tRNA(Gln) + L-glutamine + ATP + H2O = L-glutaminyl-tRNA(Gln) + L-glutamate + ADP + phosphate + H(+). Allows the formation of correctly charged Gln-tRNA(Gln) through the transamidation of misacylated Glu-tRNA(Gln) in organisms which lack glutaminyl-tRNA synthetase. The reaction takes place in the presence of glutamine and ATP through an activated gamma-phospho-Glu-tRNA(Gln). This is Glutamyl-tRNA(Gln) amidotransferase subunit A from Nitrobacter hamburgensis (strain DSM 10229 / NCIMB 13809 / X14).